A 147-amino-acid polypeptide reads, in one-letter code: Small ribosomal subunit protein uS12 (147 aa).

Belongs to the universal ribosomal protein uS12 family. As to quaternary structure, part of the 30S ribosomal subunit.

In terms of biological role, with S4 and S5 plays an important role in translational accuracy. Located at the interface of the 30S and 50S subunits. The polypeptide is Small ribosomal subunit protein uS12 (Methanococcus vannielii (strain ATCC 35089 / DSM 1224 / JCM 13029 / OCM 148 / SB)).